We begin with the raw amino-acid sequence, 518 residues long: Two-component response regulator-like PRR1 (518 aa).

The 119-residue stretch at 29–147 (RILLCDSDPS…ELLNLWTHVW (119 aa)) folds into the Response regulatory domain. Disordered regions lie at residues 172–241 (PSDA…PGVM), 266–305 (TPTT…GTDV), and 483–518 (VRQA…SSPE). Residues 196–212 (NQETSTSNQHEYESNPS) show a composition bias toward polar residues. The region spanning 443–485 (RAAALAKFRLKRKERCFDKKVRYVNRKKLAETRPRVRGQFVRQ) is the CCT domain.

The protein belongs to the ARR-like family. Interacts with PIL13. Interacts with PIL15.

It is found in the nucleus. In terms of biological role, controls photoperiodic flowering response. Seems to be one of the component of the circadian clock. Expression of several members of the ARR-like family is controlled by circadian rhythm. The particular coordinated sequential expression of PRR73, PRR37, PRR95, PRR59 and PPR1 result to circadian waves that may be at the basis of the endogenous circadian clock. This is Two-component response regulator-like PRR1 (PRR1) from Oryza sativa subsp. japonica (Rice).